A 420-amino-acid chain; its full sequence is Gamma-glutamyl phosphate reductase (420 aa).

This sequence belongs to the gamma-glutamyl phosphate reductase family.

The protein resides in the cytoplasm. The enzyme catalyses L-glutamate 5-semialdehyde + phosphate + NADP(+) = L-glutamyl 5-phosphate + NADPH + H(+). It participates in amino-acid biosynthesis; L-proline biosynthesis; L-glutamate 5-semialdehyde from L-glutamate: step 2/2. Catalyzes the NADPH-dependent reduction of L-glutamate 5-phosphate into L-glutamate 5-semialdehyde and phosphate. The product spontaneously undergoes cyclization to form 1-pyrroline-5-carboxylate. The protein is Gamma-glutamyl phosphate reductase of Streptococcus pneumoniae (strain CGSP14).